Reading from the N-terminus, the 257-residue chain is Galactitol 2-dehydrogenase (257 aa).

Residues 21-23 (RAI), 67-68 (DV), Asn94, Tyr162, and Lys166 contribute to the NAD(+) site. Tyr162 (proton acceptor) is an active-site residue.

The protein belongs to the short-chain dehydrogenases/reductases (SDR) family. Homotetramer. Requires Mg(2+) as cofactor.

The enzyme catalyses galactitol + NAD(+) = keto-D-tagatose + NADH + H(+). Functionally, catalyzes the oxidation of galactitol to D-tagatose. Also catalyzes the oxidation of a wide range of substrates, including polyvalent aliphatic alcohols and polyols, to the corresponding ketones and ketoses. Galactitol is the preferred substrate. This is Galactitol 2-dehydrogenase from Rhizobium johnstonii (strain DSM 114642 / LMG 32736 / 3841) (Rhizobium leguminosarum bv. viciae).